A 141-amino-acid polypeptide reads, in one-letter code: Small ribosomal subunit protein bS16 (141 aa).

Polar residues-rich tracts occupy residues 89–101 (NVSVSHAESTEAI) and 109–129 (ATANTESNEVSDSESTATATI). The interval 89-141 (NVSVSHAESTEAITNAEPIQATANTESNEVSDSESTATATIRESEEQPPISES) is disordered.

The protein belongs to the bacterial ribosomal protein bS16 family.

In Trichodesmium erythraeum (strain IMS101), this protein is Small ribosomal subunit protein bS16.